Here is a 164-residue protein sequence, read N- to C-terminus: Protein SprT (164 aa).

The region spanning 13–156 is the SprT-like domain; that stretch reads YQQAEAFFKR…LCRRCREPLV (144 aa). Residue histidine 69 coordinates Zn(2+). The active site involves glutamate 70. Histidine 73 lines the Zn(2+) pocket.

Belongs to the SprT family. It depends on Zn(2+) as a cofactor.

The protein localises to the cytoplasm. The sequence is that of Protein SprT from Pseudomonas syringae pv. syringae (strain B728a).